Here is a 294-residue protein sequence, read N- to C-terminus: tRNA dimethylallyltransferase (294 aa).

10–17 (GPTAVGKT) contacts ATP. 12 to 17 (TAVGKT) lines the substrate pocket. Residues 35 to 38 (DSQQ) form an interaction with substrate tRNA region.

Belongs to the IPP transferase family. As to quaternary structure, monomer. The cofactor is Mg(2+).

The catalysed reaction is adenosine(37) in tRNA + dimethylallyl diphosphate = N(6)-dimethylallyladenosine(37) in tRNA + diphosphate. In terms of biological role, catalyzes the transfer of a dimethylallyl group onto the adenine at position 37 in tRNAs that read codons beginning with uridine, leading to the formation of N6-(dimethylallyl)adenosine (i(6)A). This chain is tRNA dimethylallyltransferase, found in Streptococcus mutans serotype c (strain ATCC 700610 / UA159).